A 74-amino-acid polypeptide reads, in one-letter code: U4-theraphotoxin-Cg1a (74 aa).

A signal peptide spans 1–19; that stretch reads MNATIFAFLLLLNLAMHNA. Positions 20–39 are excised as a propeptide; that stretch reads TEQSSETDMDDTLLIPEINR. Intrachain disulfides connect Cys42–Cys56, Cys49–Cys61, and Cys55–Cys71.

It belongs to the neurotoxin 36 family. 01 subfamily. In terms of tissue distribution, expressed by the venom gland.

The protein localises to the secreted. In terms of biological role, probable ion channel inhibitor. The chain is U4-theraphotoxin-Cg1a from Chilobrachys guangxiensis (Chinese earth tiger tarantula).